Consider the following 120-residue polypeptide: Large ribosomal subunit protein uL14 (120 aa).

It belongs to the universal ribosomal protein uL14 family. As to quaternary structure, part of the 50S ribosomal subunit. Forms a cluster with proteins L3 and L19. In the 70S ribosome, L14 and L19 interact and together make contacts with the 16S rRNA in bridges B5 and B8.

In terms of biological role, binds to 23S rRNA. Forms part of two intersubunit bridges in the 70S ribosome. The protein is Large ribosomal subunit protein uL14 of Dictyoglomus thermophilum (strain ATCC 35947 / DSM 3960 / H-6-12).